A 609-amino-acid chain; its full sequence is Kelch domain-containing protein 10 homolog (609 aa).

Residues 103–146 (ASDLDEEEEEEDDDVDVDVDYGDTDSESEFEEMYSDEWTSSSDE) are disordered. Residues 104-137 (SDLDEEEEEEDDDVDVDVDYGDTDSESEFEEMYS) show a composition bias toward acidic residues. Kelch repeat units lie at residues 214–277 (HLYS…IHNN), 279–334 (LISH…IHKH), 335–381 (FLYT…RYRH), 389–437 (HIFV…GNRG), 458–508 (EAFI…HSDN), and 510–554 (CMYV…YNDN). The interval 576–609 (LPPQRRRRLDTSQPDPSMLISLYSNPKRARSSTQ) is disordered.

As to quaternary structure, interacts with Elongin-C; may be the substrate recognition component of an E3 ubiquitin ligase complex.

Its function is as follows. Activates the Pk92B/DASK1-MAPK signaling cascade. The protein is Kelch domain-containing protein 10 homolog (slim) of Drosophila melanogaster (Fruit fly).